The chain runs to 235 residues: Small ribosomal subunit protein uS10m (235 aa).

A mitochondrion-targeting transit peptide spans 1 to 19 (MLRTSVRSPLLYRCLSKRF).

This sequence belongs to the universal ribosomal protein uS10 family. Part of the mitochondrial small ribosomal subunit.

Its subcellular location is the mitochondrion. Involved in mitochondrial genome encoded proteins translation. Involved in the binding of tRNA to the ribosomes. The chain is Small ribosomal subunit protein uS10m (RSM10) from Candida glabrata (strain ATCC 2001 / BCRC 20586 / JCM 3761 / NBRC 0622 / NRRL Y-65 / CBS 138) (Yeast).